The sequence spans 321 residues: Aspartate carbamoyltransferase catalytic subunit (321 aa).

Residues R64 and T65 each contribute to the carbamoyl phosphate site. K92 is an L-aspartate binding site. R114, H142, and Q145 together coordinate carbamoyl phosphate. L-aspartate-binding residues include R175 and R229. Carbamoyl phosphate is bound by residues G270 and P271.

It belongs to the aspartate/ornithine carbamoyltransferase superfamily. ATCase family. Heterododecamer (2C3:3R2) of six catalytic PyrB chains organized as two trimers (C3), and six regulatory PyrI chains organized as three dimers (R2).

It carries out the reaction carbamoyl phosphate + L-aspartate = N-carbamoyl-L-aspartate + phosphate + H(+). It functions in the pathway pyrimidine metabolism; UMP biosynthesis via de novo pathway; (S)-dihydroorotate from bicarbonate: step 2/3. Catalyzes the condensation of carbamoyl phosphate and aspartate to form carbamoyl aspartate and inorganic phosphate, the committed step in the de novo pyrimidine nucleotide biosynthesis pathway. In Azorhizobium caulinodans (strain ATCC 43989 / DSM 5975 / JCM 20966 / LMG 6465 / NBRC 14845 / NCIMB 13405 / ORS 571), this protein is Aspartate carbamoyltransferase catalytic subunit.